Reading from the N-terminus, the 558-residue chain is Membrane protein insertase YidC (558 aa).

5 consecutive transmembrane segments (helical) span residues 3 to 23, 364 to 384, 438 to 458, 477 to 497, and 508 to 528; these read IKRT…FDNW, FVGN…AVFF, LPVV…LASV, PYFI…KLNP, and MMFM…GLVL.

The protein belongs to the OXA1/ALB3/YidC family. Type 1 subfamily. As to quaternary structure, interacts with the Sec translocase complex via SecD. Specifically interacts with transmembrane segments of nascent integral membrane proteins during membrane integration.

The protein resides in the cell inner membrane. In terms of biological role, required for the insertion and/or proper folding and/or complex formation of integral membrane proteins into the membrane. Involved in integration of membrane proteins that insert both dependently and independently of the Sec translocase complex, as well as at least some lipoproteins. Aids folding of multispanning membrane proteins. The polypeptide is Membrane protein insertase YidC (Burkholderia pseudomallei (strain K96243)).